Reading from the N-terminus, the 644-residue chain is Threonine--tRNA ligase (644 aa).

The TGS domain maps to Met-1–Tyr-61. The catalytic stretch occupies residues Asp-241–Pro-532. Zn(2+)-binding residues include Cys-333, His-384, and His-509.

It belongs to the class-II aminoacyl-tRNA synthetase family. In terms of assembly, homodimer. It depends on Zn(2+) as a cofactor.

It is found in the cytoplasm. It carries out the reaction tRNA(Thr) + L-threonine + ATP = L-threonyl-tRNA(Thr) + AMP + diphosphate + H(+). Functionally, catalyzes the attachment of threonine to tRNA(Thr) in a two-step reaction: L-threonine is first activated by ATP to form Thr-AMP and then transferred to the acceptor end of tRNA(Thr). Also edits incorrectly charged L-seryl-tRNA(Thr). This chain is Threonine--tRNA ligase, found in Oleidesulfovibrio alaskensis (strain ATCC BAA-1058 / DSM 17464 / G20) (Desulfovibrio alaskensis).